A 331-amino-acid chain; its full sequence is Probable mannose-1-phosphate guanylyltransferase 3 (331 aa).

K3 serves as a coordination point for diphosphate. GDP-alpha-D-mannose-binding residues include G66, N90, D92, G127, and N154.

Belongs to the transferase hexapeptide repeat family.

The enzyme catalyses alpha-D-mannose 1-phosphate + GTP + H(+) = GDP-alpha-D-mannose + diphosphate. The protein operates within nucleotide-sugar biosynthesis; GDP-alpha-D-mannose biosynthesis; GDP-alpha-D-mannose from alpha-D-mannose 1-phosphate (GTP route): step 1/1. In terms of biological role, catalyzes a reaction of the Smirnoff-Wheeler pathway, the major route to ascorbate biosynthesis in plants. This chain is Probable mannose-1-phosphate guanylyltransferase 3, found in Arabidopsis thaliana (Mouse-ear cress).